The sequence spans 787 residues: MANILRKWVESDKREIARLGKIADKVQQYEDEYAALSDEQLKANTPKLKDRLAAGATLDDILPEAFATAREGAKRVLGLFPFRVQIIGGIVLHEGNIAEMKTGEGKTLTATMPVYLNALTGKGVHVVTVNEYLSTRDATEMGELYNWLGLSVGLNLNSKNSDEKREAYNCDITYSTNSELGFDYLRDNMVVYKEQMVQRPLNFAIVDEVDSILIDEARTPLIISGGAEKTTGLYIRADRFVKTLKAETDYKIDWPTKTISLTESGIRKAEKNFGLDNLYDTENTALTHHIDQALRANYIMLKDIDYMVSDGEVLIVDQFTGRAMEGRRYSDGLHQAIEAKEGVQIQDENKTMANITYQNFFRMYTKLAGMTGTAKTEQEEFREIYNMEVISVPTNKPVIRVDSPDVLYPTLDAKFNAVVEDIKARHEKGQPMLIGTVAIESSERLSKQLDEAKIPHTVLNAKNHFKEAEIIMNAGQRGAVTIATNMAGRGTDIKLGPGVTELGGLAVIGTERHESRRIDNQLRGRSGRQGDPGSTQFYLSLEDDLMKRFGSDRIKAMLDRFKVADDDQVIQSRMISRQVESAQKRVEGNNYDTRKNTLQYDDVMREQREVIYKQRQQVINEQETLKPVLMAMINRTITRIVQTHTQGDQKDWNLDALYAWVTANMIDPEKFKRSQLDGKSQDELIGLLAEMAETNFQQKNKQLGDDAQMLEFEKVVILRVVDSAWTDHIDAMDQLRQSIGLRGYGQMNPLVEYQEEGYRMFEEMIASIDDDVTRLFMKAEIRQNIRR.

ATP contacts are provided by residues Q85, 103-107 (GEGKT), and D492.

The protein belongs to the SecA family. In terms of assembly, monomer and homodimer. Part of the essential Sec protein translocation apparatus which comprises SecA, SecYEG and auxiliary proteins SecDF. Other proteins may also be involved.

The protein resides in the cell membrane. It is found in the cytoplasm. The catalysed reaction is ATP + H2O + cellular proteinSide 1 = ADP + phosphate + cellular proteinSide 2.. Part of the Sec protein translocase complex. Interacts with the SecYEG preprotein conducting channel. Has a central role in coupling the hydrolysis of ATP to the transfer of proteins into and across the cell membrane, serving as an ATP-driven molecular motor driving the stepwise translocation of polypeptide chains across the membrane. The chain is Protein translocase subunit SecA from Lacticaseibacillus casei (strain BL23) (Lactobacillus casei).